Consider the following 179-residue polypeptide: Large ribosomal subunit protein uL5 (179 aa).

The protein belongs to the universal ribosomal protein uL5 family. Part of the 50S ribosomal subunit; part of the 5S rRNA/L5/L18/L25 subcomplex. Contacts the 5S rRNA and the P site tRNA. Forms a bridge to the 30S subunit in the 70S ribosome.

Its function is as follows. This is one of the proteins that bind and probably mediate the attachment of the 5S RNA into the large ribosomal subunit, where it forms part of the central protuberance. In the 70S ribosome it contacts protein S13 of the 30S subunit (bridge B1b), connecting the 2 subunits; this bridge is implicated in subunit movement. Contacts the P site tRNA; the 5S rRNA and some of its associated proteins might help stabilize positioning of ribosome-bound tRNAs. In Bacillus cereus (strain Q1), this protein is Large ribosomal subunit protein uL5.